Reading from the N-terminus, the 245-residue chain is Adenosylcobinamide-GDP ribazoletransferase (245 aa).

The next 5 helical transmembrane spans lie at 31 to 51 (LLHY…AALL), 57 to 77 (PLLQ…ALHL), 109 to 129 (VAVV…LVVL), 134 to 154 (PAAL…LFLC), and 176 to 196 (ALMV…TGLL).

The protein belongs to the CobS family. The cofactor is Mg(2+).

The protein resides in the cell inner membrane. The enzyme catalyses alpha-ribazole + adenosylcob(III)inamide-GDP = adenosylcob(III)alamin + GMP + H(+). The catalysed reaction is alpha-ribazole 5'-phosphate + adenosylcob(III)inamide-GDP = adenosylcob(III)alamin 5'-phosphate + GMP + H(+). It functions in the pathway cofactor biosynthesis; adenosylcobalamin biosynthesis; adenosylcobalamin from cob(II)yrinate a,c-diamide: step 7/7. Joins adenosylcobinamide-GDP and alpha-ribazole to generate adenosylcobalamin (Ado-cobalamin). Also synthesizes adenosylcobalamin 5'-phosphate from adenosylcobinamide-GDP and alpha-ribazole 5'-phosphate. The protein is Adenosylcobinamide-GDP ribazoletransferase of Stutzerimonas stutzeri (strain A1501) (Pseudomonas stutzeri).